Reading from the N-terminus, the 315-residue chain is Methionyl-tRNA formyltransferase (315 aa).

(6S)-5,6,7,8-tetrahydrofolate is bound at residue 113 to 116; sequence SLLP.

It belongs to the Fmt family.

The catalysed reaction is L-methionyl-tRNA(fMet) + (6R)-10-formyltetrahydrofolate = N-formyl-L-methionyl-tRNA(fMet) + (6S)-5,6,7,8-tetrahydrofolate + H(+). In terms of biological role, attaches a formyl group to the free amino group of methionyl-tRNA(fMet). The formyl group appears to play a dual role in the initiator identity of N-formylmethionyl-tRNA by promoting its recognition by IF2 and preventing the misappropriation of this tRNA by the elongation apparatus. The polypeptide is Methionyl-tRNA formyltransferase (Salmonella gallinarum (strain 287/91 / NCTC 13346)).